The chain runs to 274 residues: Putative septum site-determining protein MinD (274 aa).

Residue 22-29 (KGGVGKTT) coordinates ATP.

It belongs to the ParA family. MinD subfamily.

The protein resides in the plastid. The protein localises to the chloroplast. In terms of biological role, ATPase required for the correct placement of the division site. This Nephroselmis olivacea (Green alga) protein is Putative septum site-determining protein MinD (minD-A).